The chain runs to 393 residues: Chorismate synthase (393 aa).

NADP(+)-binding residues include R40 and R46. FMN-binding positions include 135 to 137 (RAS), 257 to 258 (QA), G301, 316 to 320 (KPIAT), and R342. Residues 280-306 (DEIDVGPDGIRRRSNRAGGVEGGMSTG) are disordered.

This sequence belongs to the chorismate synthase family. In terms of assembly, homotetramer. Requires FMNH2 as cofactor.

It carries out the reaction 5-O-(1-carboxyvinyl)-3-phosphoshikimate = chorismate + phosphate. The protein operates within metabolic intermediate biosynthesis; chorismate biosynthesis; chorismate from D-erythrose 4-phosphate and phosphoenolpyruvate: step 7/7. In terms of biological role, catalyzes the anti-1,4-elimination of the C-3 phosphate and the C-6 proR hydrogen from 5-enolpyruvylshikimate-3-phosphate (EPSP) to yield chorismate, which is the branch point compound that serves as the starting substrate for the three terminal pathways of aromatic amino acid biosynthesis. This reaction introduces a second double bond into the aromatic ring system. The polypeptide is Chorismate synthase (Thermobifida fusca (strain YX)).